Here is a 465-residue protein sequence, read N- to C-terminus: MGLYAAAAAVLAGVESRQGSLKGLVYSSNFQNLKQLYALVCETQRYSAVLDAVIASAGLLRAEKKLRPHLAKVLVYELLLGKGFRGGGGRWKALLGRHQARLKAELARLKVHRGVSRNEDLLQESSRPGQAYQVPRFVRVNTLKTRPEDAIDYFKRQGFSYQGRASSLEDLRALKGQHFLLDPLLPELLVFPAQTDLHEHPLYRAGHLILQDKASCLPAMLLSPPPGSHVIDACAAPGNKTSYIAALLKNQGKIFAFDQDAKRLAAMATLVARAGVSCCELAEKDFLTVSPSDQRYSQVQYILLDPSCSGSGMLSRQLEEHGEGTPSKERLQALAGFQQRALCHALRFPSLQRLVYSTCSLCQEENEDVVQEALQHNSGTFRLAPVLPTWPHRGLSTFPGSEHCLRASPETTLTGGFFIAVFERAEVVPTPAPQTDAMDPEPLSQVPKRKRRRKAAVGASMQPST.

Residue G2 is modified to N-acetylglycine. S167 carries the post-translational modification Phosphoserine. S-adenosyl-L-methionine-binding positions include 234–240, D258, R263, and D305; that span reads CAAPGNK. Catalysis depends on C359, which acts as the Nucleophile. The tract at residues 430-465 is disordered; that stretch reads TPAPQTDAMDPEPLSQVPKRKRRRKAAVGASMQPST.

Belongs to the class I-like SAM-binding methyltransferase superfamily. RsmB/NOP family. As to expression, in the hippocampus, specifically expressed in adult hippocampal NG2-positive oligodendrocyte precursor cells (at protein level).

The protein resides in the nucleus. Its subcellular location is the nucleolus. It catalyses the reaction a cytidine in 28S rRNA + S-adenosyl-L-methionine = a 5-methylcytidine in 28S rRNA + S-adenosyl-L-homocysteine + H(+). In terms of biological role, S-adenosyl-L-methionine-dependent methyltransferase that specifically methylates the C(5) position of cytosine 3438 (m5C3438) in 28S rRNA. m5C3782 promotes protein translation without affecting ribosome biogenesis and fidelity. Required for corpus callosum and cerebral cortex development. The protein is 28S rRNA (cytosine-C(5))-methyltransferase of Mus musculus (Mouse).